The sequence spans 35 residues: Photosystem I reaction center subunit Z (35 aa).

Residues 10 to 30 (LVIITTLVVPFMAAAALLFII) form a helical membrane-spanning segment.

In terms of assembly, the G.violaceus PSI reaction center is composed of one copy each of PsaA,B,C,D,E,F,L,M and Z, and forms trimeric complexes.

It localises to the cell inner membrane. The sequence is that of Photosystem I reaction center subunit Z (psaZ) from Gloeobacter violaceus (strain ATCC 29082 / PCC 7421).